The following is a 264-amino-acid chain: S-adenosylmethionine decarboxylase proenzyme (264 aa).

The Schiff-base intermediate with substrate; via pyruvic acid role is filled by S113. The residue at position 113 (S113) is a Pyruvic acid (Ser); by autocatalysis. The active-site Proton acceptor; for processing activity is the H118. Catalysis depends on C141, which acts as the Proton donor; for catalytic activity.

The protein belongs to the prokaryotic AdoMetDC family. Type 2 subfamily. As to quaternary structure, heterooctamer of four alpha and four beta chains arranged as a tetramer of alpha/beta heterodimers. It depends on pyruvate as a cofactor. Is synthesized initially as an inactive proenzyme. Formation of the active enzyme involves a self-maturation process in which the active site pyruvoyl group is generated from an internal serine residue via an autocatalytic post-translational modification. Two non-identical subunits are generated from the proenzyme in this reaction, and the pyruvate is formed at the N-terminus of the alpha chain, which is derived from the carboxyl end of the proenzyme. The post-translation cleavage follows an unusual pathway, termed non-hydrolytic serinolysis, in which the side chain hydroxyl group of the serine supplies its oxygen atom to form the C-terminus of the beta chain, while the remainder of the serine residue undergoes an oxidative deamination to produce ammonia and the pyruvoyl group blocking the N-terminus of the alpha chain.

The enzyme catalyses S-adenosyl-L-methionine + H(+) = S-adenosyl 3-(methylsulfanyl)propylamine + CO2. It functions in the pathway amine and polyamine biosynthesis; S-adenosylmethioninamine biosynthesis; S-adenosylmethioninamine from S-adenosyl-L-methionine: step 1/1. Functionally, catalyzes the decarboxylation of S-adenosylmethionine to S-adenosylmethioninamine (dcAdoMet), the propylamine donor required for the synthesis of the polyamines spermine and spermidine from the diamine putrescine. This Xanthomonas campestris pv. campestris (strain B100) protein is S-adenosylmethionine decarboxylase proenzyme.